The following is a 153-amino-acid chain: Putative nuclear shuttle protein (153 aa).

It belongs to the nanoviridae nuclear shuttle protein family.

It localises to the host nucleus. It is found in the host cytoplasm. Its function is as follows. Putative nuclear shuttle protein. The polypeptide is Putative nuclear shuttle protein (DNA-N) (Faba bean necrotic yellows virus (isolate Syrian SV292-88) (FBNYV)).